The primary structure comprises 455 residues: Chromosomal replication initiator protein DnaA 2 (455 aa).

Residues 1-95 form a domain I, interacts with DnaA modulators region; it reads MLTCNDCSTW…KRSSPQIAAS (95 aa). Residues 96–112 form a domain II region; it reads VTKPAVEVSEENKDFQL. The segment at 113–328 is domain III, AAA+ region; sequence KLNGAYRFDN…GAINKLTAYC (216 aa). The ATP site is built by Gly-157, Gly-159, Lys-160, and Thr-161. A domain IV, binds dsDNA region spans residues 329 to 455; it reads LLFNKPLTET…IAIDSPQHFV (127 aa).

It belongs to the DnaA family. Oligomerizes as a right-handed, spiral filament on DNA at oriC.

The protein resides in the cytoplasm. Its function is as follows. Plays an essential role in the initiation and regulation of chromosomal replication. ATP-DnaA binds to the origin of replication (oriC) to initiate formation of the DNA replication initiation complex once per cell cycle. Binds the DnaA box (a 9 base pair repeat at the origin) and separates the double-stranded (ds)DNA. Forms a right-handed helical filament on oriC DNA; dsDNA binds to the exterior of the filament while single-stranded (ss)DNA is stabiized in the filament's interior. The ATP-DnaA-oriC complex binds and stabilizes one strand of the AT-rich DNA unwinding element (DUE), permitting loading of DNA polymerase. After initiation quickly degrades to an ADP-DnaA complex that is not apt for DNA replication. Binds acidic phospholipids. In Chlamydia muridarum (strain MoPn / Nigg), this protein is Chromosomal replication initiator protein DnaA 2.